A 151-amino-acid polypeptide reads, in one-letter code: Phosphopantetheine adenylyltransferase (151 aa).

Serine 9 is a substrate binding site. ATP contacts are provided by residues 9 to 10 (SF) and histidine 17. Substrate is bound by residues lysine 41, threonine 73, and arginine 87. ATP contacts are provided by residues 88–90 (GLR), glutamate 98, and 122–128 (KAHISST).

The protein belongs to the bacterial CoaD family. In terms of assembly, homohexamer. Mg(2+) serves as cofactor.

The protein resides in the cytoplasm. The catalysed reaction is (R)-4'-phosphopantetheine + ATP + H(+) = 3'-dephospho-CoA + diphosphate. It functions in the pathway cofactor biosynthesis; coenzyme A biosynthesis; CoA from (R)-pantothenate: step 4/5. Its function is as follows. Reversibly transfers an adenylyl group from ATP to 4'-phosphopantetheine, yielding dephospho-CoA (dPCoA) and pyrophosphate. This Christiangramia forsetii (strain DSM 17595 / CGMCC 1.15422 / KT0803) (Gramella forsetii) protein is Phosphopantetheine adenylyltransferase.